The sequence spans 549 residues: Tegument protein (549 aa).

3 disordered regions span residues 50–92, 353–391, and 523–542; these read KKKA…TASP, ETGD…CSSY, and TPIK…TRSP. Polar residues-rich tracts occupy residues 75 to 84 and 356 to 369; these read PQALSVPSLS and DCSS…QTHR. The segment covering 523–534 has biased composition (low complexity); sequence TPIKTTSSSSPR.

In terms of biological role, this viral structural protein may have important functions, such as protein kinase activity, DNA binding, and possible transcriptional activation of immediate-early genes. The protein is Tegument protein of Homo sapiens (Human).